Here is a 1938-residue protein sequence, read N- to C-terminus: Myosin-6 (1938 aa).

The 50-residue stretch at 31–80 (DIRTECFVPDDKEEYVKAKIVSREGGKVTAETENGKTVTVKEDQVMQQNP) folds into the Myosin N-terminal SH3-like domain. The region spanning 84–779 (DKIEDMAMLT…LLGLLEEMRD (696 aa)) is the Myosin motor domain. Position 128 is an N6,N6,N6-trimethyllysine (Lys128). 177–184 (GESGAGKT) is a binding site for ATP. Thr378 is subject to Phosphothreonine. Ser416 carries the post-translational modification Phosphoserine. 2 actin-binding regions span residues 656–678 (LNKL…IPNE) and 758–772 (KFGH…GLLG). Residues 782–811 (LSRIITRIQAQARGQLMRIEFKKMVERRDA) form the IQ domain. Calmodulin-binding regions lie at residues 789–806 (IQAQ…KKMV) and 815–832 (IQWN…PWMK). The stretch at 842 to 1938 (KSAETEKEMA…GAKQKMHDEE (1097 aa)) forms a coiled coil. Residues Ser1089 and Ser1138 each carry the phosphoserine modification. Position 1260 is a phosphotyrosine (Tyr1260). The residue at position 1270 (Ser1270) is a Phosphoserine. Thr1276 and Thr1283 each carry phosphothreonine. A Phosphoserine modification is found at Ser1308. Tyr1309 is modified (phosphotyrosine). Residue Thr1310 is modified to Phosphothreonine. Ser1511 carries the phosphoserine modification. Phosphothreonine is present on residues Thr1514 and Thr1680. The segment at 1907–1938 (AEERADIAESQVNKLRAKSRDIGAKQKMHDEE) is disordered. Positions 1924–1938 (KSRDIGAKQKMHDEE) are enriched in basic and acidic residues.

It belongs to the TRAFAC class myosin-kinesin ATPase superfamily. Myosin family. In terms of assembly, muscle myosin is a hexameric protein that consists of 2 heavy chain subunits (MHC), 2 alkali light chain subunits (MLC) and 2 regulatory light chain subunits (MLC-2).

The protein resides in the cytoplasm. Its subcellular location is the myofibril. Functionally, muscle contraction. This chain is Myosin-6 (Myh6), found in Rattus norvegicus (Rat).